A 516-amino-acid chain; its full sequence is D-alanine--D-alanyl carrier protein ligase (516 aa).

156–157 (TS) is a binding site for ATP. Residue Asp-203 participates in D-alanine binding. Residue 298 to 303 (NAYGPT) participates in ATP binding. Val-307 lines the D-alanine pocket. Residues Asp-389, 401-404 (YGGR), and Lys-503 contribute to the ATP site. Residue Lys-503 participates in D-alanine binding.

It belongs to the ATP-dependent AMP-binding enzyme family. DltA subfamily.

The protein resides in the cytoplasm. It catalyses the reaction holo-[D-alanyl-carrier protein] + D-alanine + ATP = D-alanyl-[D-alanyl-carrier protein] + AMP + diphosphate. Its pathway is cell wall biogenesis; lipoteichoic acid biosynthesis. Catalyzes the first step in the D-alanylation of lipoteichoic acid (LTA), the activation of D-alanine and its transfer onto the D-alanyl carrier protein (Dcp) DltC. In an ATP-dependent two-step reaction, forms a high energy D-alanyl-AMP intermediate, followed by transfer of the D-alanyl residue as a thiol ester to the phosphopantheinyl prosthetic group of the Dcp. D-alanylation of LTA plays an important role in modulating the properties of the cell wall in Gram-positive bacteria, influencing the net charge of the cell wall. This chain is D-alanine--D-alanyl carrier protein ligase, found in Streptococcus pneumoniae serotype 4 (strain ATCC BAA-334 / TIGR4).